The primary structure comprises 227 residues: Riboflavin kinase (227 aa).

The tract at residues 1–92 (MSKDYEVFPL…LKRTIDSSTF (92 aa)) is H-T-H motif-like. The interval 93–227 (LTLRGYVVPG…GDKVEVVIPV (135 aa)) is riboflavin kinase. 102–107 (GLGEGA) contributes to the CDP binding site. Residues threonine 131 and asparagine 133 each contribute to the Mg(2+) site. Residues threonine 194 and glutamate 202 each coordinate FMN. Position 207-210 (207-210 (VRLR)) interacts with CDP.

The protein belongs to the archaeal riboflavin kinase family. Mg(2+) is required as a cofactor.

It catalyses the reaction riboflavin + CTP = CDP + FMN + H(+). It participates in cofactor biosynthesis; FMN biosynthesis; FMN from riboflavin (CTP route): step 1/1. Catalyzes the CTP-dependent phosphorylation of riboflavin (vitamin B2) to form flavin mononucleotide (FMN). This Thermofilum pendens (strain DSM 2475 / Hrk 5) protein is Riboflavin kinase (ribK).